Consider the following 518-residue polypeptide: Apolipoprotein N-acyltransferase (518 aa).

6 helical membrane passes run 22 to 42 (LAFILGASTALSFAPYSLWII), 63 to 83 (FFHWLSFGFGCFAVGISWVHV), 101 to 121 (ALLALYLALYPALTGLGLAWF), 134 to 154 (LLFPALWTLTEWARGWVLTGF), 174 to 194 (IIGALGLSFIIAMIAGALALC), and 202 to 222 (LLILLPITAVAAWVAPKLSQI). The CN hydrolase domain maps to 234-484 (VQGNIPQSMK…TGVLSATIPL (251 aa)). The active-site Proton acceptor is glutamate 273. Lysine 343 is a catalytic residue. Cysteine 395 (nucleophile) is an active-site residue. The helical transmembrane segment at 492–512 (AKIGQTPLLILCGALLLVGFI) threads the bilayer.

Belongs to the CN hydrolase family. Apolipoprotein N-acyltransferase subfamily.

Its subcellular location is the cell inner membrane. It carries out the reaction N-terminal S-1,2-diacyl-sn-glyceryl-L-cysteinyl-[lipoprotein] + a glycerophospholipid = N-acyl-S-1,2-diacyl-sn-glyceryl-L-cysteinyl-[lipoprotein] + a 2-acyl-sn-glycero-3-phospholipid + H(+). It functions in the pathway protein modification; lipoprotein biosynthesis (N-acyl transfer). In terms of biological role, catalyzes the phospholipid dependent N-acylation of the N-terminal cysteine of apolipoprotein, the last step in lipoprotein maturation. This Shewanella oneidensis (strain ATCC 700550 / JCM 31522 / CIP 106686 / LMG 19005 / NCIMB 14063 / MR-1) protein is Apolipoprotein N-acyltransferase.